We begin with the raw amino-acid sequence, 96 residues long: uncharacterized protein (96 aa).

The N-terminal stretch at 1 to 28 (MNKKAIVGIFMSILMAGLVGCAGSSDAQ) is a signal peptide.

This is an uncharacterized protein from Butyrivibrio fibrisolvens.